The chain runs to 144 residues: Mediator of RNA polymerase II transcription subunit 21 (144 aa).

The protein belongs to the Mediator complex subunit 21 family. In terms of assembly, component of the Mediator complex, which is composed of MED1, MED4, MED6, MED7, MED8, MED9, MED10, MED11, MED12, MED13, MED13L, MED14, MED15, MED16, MED17, MED18, MED19, MED20, MED21, MED22, MED23, MED24, MED25, MED26, MED27, MED29, MED30, MED31, CCNC, CDK8 and CDC2L6/CDK11. The MED12, MED13, CCNC and CDK8 subunits form a distinct module termed the CDK8 module. Mediator containing the CDK8 module is less active than Mediator lacking this module in supporting transcriptional activation. Individual preparations of the Mediator complex lacking one or more distinct subunits have been variously termed ARC, CRSP, DRIP, PC2, SMCC and TRAP. Interacts with PPARG. Interacts with THRA in a ligand-dependent fashion.

It localises to the nucleus. Its function is as follows. Component of the Mediator complex, a coactivator involved in the regulated transcription of nearly all RNA polymerase II-dependent genes. Mediator functions as a bridge to convey information from gene-specific regulatory proteins to the basal RNA polymerase II transcription machinery. Mediator is recruited to promoters by direct interactions with regulatory proteins and serves as a scaffold for the assembly of a functional preinitiation complex with RNA polymerase II and the general transcription factors. The protein is Mediator of RNA polymerase II transcription subunit 21 (MED21) of Pongo abelii (Sumatran orangutan).